The chain runs to 580 residues: MRFKSIQQNIEDEGKVNVREVNPDSYAERDHGYTAGIFSDAEENFGITQQVADSTQNPTSKPKSRHAHFHETVHENPSEYSRSKCKQPTNEKEYDKAIEALVAKAIVEEHSGQQFPVYKGLEQYTLLQKMGDGAFSNVYKAIHNRTGEKVAIKVVQRAQPNTDPRDPRKRQGVESHNILKEVQIMRRVKHPNIIQLLEFIQTPEYYYLVLELADGGELFHQIVRLTYFSEDLSRHVITQVAHAIRYLHEDCGVVHRDIKPENLLFDSIDFVPSRVRKYRAGDDPDKVDEGEFIPGVGAGTIGRIRLADFGLSKVVWDSHTQTPCGTMGYTAPEIVRDERYSKGVDMWALGCVLYTILCGFPPFYDESISLLTKKVSRGEYSFLSPWWDDISKSAKDLISHLLTVDPESRYDIHQFLAHPWISGSREPTFPATDAPNTAQRENPFTYDFLEPEDVAAAGSAARTPGVNSLREVFNISYAAHRMEQEKIRKRGQRGNQGIMNFMGDMDDLMEENDDYDDGTKSVEHSMKRVNLSGENDPSLASRQPAQSQQQSSQRSRNKFKGFQLNLSKATLYNRRHRQKV.

Residues 51–61 (VADSTQNPTSK) are compositionally biased toward polar residues. Positions 51 to 91 (VADSTQNPTSKPKSRHAHFHETVHENPSEYSRSKCKQPTNE) are disordered. Positions 124–421 (YTLLQKMGDG…IHQFLAHPWI (298 aa)) constitute a Protein kinase domain. Residues 130–138 (MGDGAFSNV) and Lys-153 contribute to the ATP site. Asp-257 functions as the Proton acceptor in the catalytic mechanism. A disordered region spans residues 530–580 (NLSGENDPSLASRQPAQSQQQSSQRSRNKFKGFQLNLSKATLYNRRHRQKV). Positions 537–554 (PSLASRQPAQSQQQSSQR) are enriched in low complexity.

The protein belongs to the protein kinase superfamily. CAMK Ser/Thr protein kinase family. CaMK subfamily. Mg(2+) is required as a cofactor. In terms of processing, phosphorylated by sty1.

The protein resides in the cytoplasm. It is found in the nucleus. The protein localises to the nucleolus. Its subcellular location is the spore core. The enzyme catalyses L-seryl-[protein] + ATP = O-phospho-L-seryl-[protein] + ADP + H(+). The catalysed reaction is L-threonyl-[protein] + ATP = O-phospho-L-threonyl-[protein] + ADP + H(+). Delays the mitotic G2/M transition by promoting nuclear exclusion of cdc25. During osmotic stress, inhibits the G2/M transition in a sty1 stress-activated MAPK pathway-dependent manner. The protein is Serine/threonine-protein kinase srk1 of Schizosaccharomyces pombe (strain 972 / ATCC 24843) (Fission yeast).